The primary structure comprises 101 residues: Small ribosomal subunit protein uS14 (101 aa).

It belongs to the universal ribosomal protein uS14 family. Part of the 30S ribosomal subunit. Contacts proteins S3 and S10.

Binds 16S rRNA, required for the assembly of 30S particles and may also be responsible for determining the conformation of the 16S rRNA at the A site. The protein is Small ribosomal subunit protein uS14 of Shewanella sp. (strain MR-4).